The sequence spans 70 residues: Toxin Isom2 (70 aa).

The LCN-type CS-alpha/beta domain occupies 2 to 65 (KNGYAVDSSG…ISDTRKKYCD (64 aa)). 4 cysteine pairs are disulfide-bonded: cysteine 16/cysteine 37, cysteine 22/cysteine 42, cysteine 26/cysteine 44, and cysteine 38/cysteine 64.

In terms of tissue distribution, expressed by the venom gland.

It localises to the secreted. Its function is as follows. Excitatory insect beta-toxins induce a spastic paralysis. They bind voltage-independently at site-4 of sodium channels (Nav) and shift the voltage of activation toward more negative potentials thereby affecting sodium channel activation and promoting spontaneous and repetitive firing. The protein is Toxin Isom2 of Isometrus vittatus (Bark scorpion).